An 872-amino-acid chain; its full sequence is Armadillo repeat-containing protein 3 (872 aa).

12 ARM repeats span residues 15–54, 57–96, 98–138, 140–179, 181–220, 222–262, 264–304, 306–345, 346–385, 388–427, 429–468, and 470–509; these read DVFDPLMIESKKAATVVLMLNSPEEEILAKACEAIYKFAL, EENKTTLLELGAVEPLTKLLTHEDKIVRRNATMIFGILAS, NDVK…NMSA, YTSKVQIFEHGGLEPLIRLLSSPDPDVKKNSMECIYNLVQ, FQCRAKLQELNAIPPILDLLKSEYPVIQLLALKTLGVIAN, KESR…NCLE, MDTM…KAAY, PENRKLFHEQEVEKCLVALLGSENDGTKIAASQAISAMCE, NSGSKDFFNNQGIPQLIQLLKSDNEEVREAAALALANLTT, PANANAAAEADGIDPLINLLSSKRDGAIANAATVLTNMAM, EPLRLNIQNHDIMHAIISPLRSANTVVQSKAALAVTATAC, and VEARTELRNSGGLEPLVELLRSKNDEVRKHASWAVMVCAG. S-palmitoyl cysteine attachment occurs at residues Cys507 and Cys518. The interval 610-693 is disordered; sequence VSPPSSMEDK…SKGKKEEEKV (84 aa). Low complexity predominate over residues 626-635; it reads RSISSSSSLR. Basic residues predominate over residues 636–646; that stretch reads RSSKEKNKKNS. Over residues 675 to 693 the composition is skewed to basic and acidic residues; that stretch reads ATKEKGWRKSKGKKEEEKV.

As to quaternary structure, homodimer. Interacts with PIK3C3, PIK3R4 and BECN1. Interacts (via ARM domains) with ATG14. Palmitoylation is important for its function in autophagy. Expressed in skeletal muscle, brain, lung, kidney, prostate and testis. As to expression, mainly expressed in skeletal muscle, liver, spleen and thymus. In terms of tissue distribution, expressed only in the testis among normal tissues but is expressed frequently in various cancer tissues and, particularly, in pancreatic, lung and endometrial cancers.

Functionally, essential for male fertility and sperm motility. During spermatogenesis, promotes the autophagic degradation of excessive ribosomes, providing energy resources for mitochondria and thus ensuring sperm flagellar motility. The sequence is that of Armadillo repeat-containing protein 3 (ARMC3) from Homo sapiens (Human).